Consider the following 138-residue polypeptide: Superoxide dismutase [Mn] (138 aa).

Residues His-2, His-49, Asp-133, and His-137 each contribute to the Mn(2+) site.

Belongs to the iron/manganese superoxide dismutase family. Mn(2+) serves as cofactor.

The catalysed reaction is 2 superoxide + 2 H(+) = H2O2 + O2. Its function is as follows. Destroys superoxide anion radicals which are normally produced within the cells and which are toxic to biological systems. The polypeptide is Superoxide dismutase [Mn] (sodA) (Mycobacterium szulgai).